The chain runs to 1357 residues: Vascular endothelial growth factor receptor 3 (1357 aa).

The signal sequence occupies residues 1–24 (MKRDFTFFCRIWIGIPFFSGLVNG). 7 consecutive Ig-like C2-type domains span residues 25–121 (FSMS…YYRC), 138–244 (IFVF…VQVI), 255–343 (PEDS…RELT), 352–442 (PFIS…LNFT), 453–583 (EKEA…TTIP), 583–690 (PEGF…HRKY), and 699–785 (PRYR…ATVS). Topologically, residues 25-796 (FSMSPPTLDN…IGSDDKTNVE (772 aa)) are extracellular. N-linked (GlcNAc...) asparagine glycans are attached at residues Asn44, Asn48, Asn114, Asn216, and Asn271. Disulfide bonds link Cys51–Cys121 and Cys173–Cys225. A disulfide bond links Cys272 and Cys331. N-linked (GlcNAc...) asparagine glycans are attached at residues Asn360, Asn400, and Asn440. Intrachain disulfides connect Cys473/Cys562, Cys493/Cys514, and Cys606/Cys674. Residues Asn553, Asn610, Asn660, Asn707, Asn711, and Asn751 are each glycosylated (N-linked (GlcNAc...) asparagine). A disulfide bridge connects residues Cys720 and Cys772. A helical membrane pass occupies residues 797 to 817 (IVILIGTGVIAIFFWVLLLVI). The Cytoplasmic portion of the chain corresponds to 818 to 1357 (FCNVKRVNPA…DYFSSSDQAV (540 aa)). The region spanning 866 to 1181 (LRLGKVLGHG…ALVEILGDLL (316 aa)) is the Protein kinase domain. ATP contacts are provided by residues 872 to 880 (LGHGAFGKV) and Lys900. A disordered region spans residues 978–1007 (QSQVRRMIEAGQASQSEHQPSTSSTNPPRV). Positions 989–1005 (QASQSEHQPSTSSTNPP) are enriched in polar residues. The Proton acceptor role is filled by Asp1045. Phosphotyrosine; by autocatalysis is present on residues Tyr1071 and Tyr1076. The disordered stretch occupies residues 1192–1212 (NVSQSSEDDGFSQASSRPPSQ). Phosphotyrosine; by autocatalysis is present on residues Tyr1226, Tyr1227, Tyr1334, and Tyr1338.

This sequence belongs to the protein kinase superfamily. Tyr protein kinase family. CSF-1/PDGF receptor subfamily. In terms of assembly, interacts with vegfc and vegfd. Monomer in the absence of bound vegfc or vegfd. Homodimer in the presence of bound vegfc or vegfd. In terms of processing, autophosphorylated on tyrosine residues upon ligand binding. Autophosphorylation occurs in trans, i.e. one subunit of the dimeric receptor phosphorylates tyrosine residues on the other subunit.

The protein resides in the cell membrane. Its subcellular location is the cytoplasm. It localises to the nucleus. The enzyme catalyses L-tyrosyl-[protein] + ATP = O-phospho-L-tyrosyl-[protein] + ADP + H(+). Its activity is regulated as follows. Present in an inactive conformation in the absence of bound ligand. Binding of vegfc or vegfd leads to dimerization and activation by autophosphorylation on tyrosine residues. Tyrosine-protein kinase that acts as a cell-surface receptor for vegf or vegfc. Combinations of multiple VEGF receptors are required for development of different blood vessel types in the embryo. Involved in angiogenesis, specifically in VEGF-induced sprouting of new blood vessels, but not required for proper vasculogenesis or hematopoiesis. In Danio rerio (Zebrafish), this protein is Vascular endothelial growth factor receptor 3 (flt4).